Here is a 414-residue protein sequence, read N- to C-terminus: Protein SOSEKI 2 (414 aa).

A DIX-like oligomerization domain region spans residues R44–D135. Residues S171–R273 form a disordered region. Acidic residues predominate over residues D173 to L192. The segment covering P205 to K229 has biased composition (polar residues). The segment covering T230–D242 has biased composition (basic and acidic residues). The short motif at C283 to G284 is the Association to cell membranes element.

It belongs to the SOSEKI family. Homodimer. Forms long polymer filaments with other SOKs proteins polymers (e.g. SOK1, SOK2, SOK3 and SOK4) crucial for polar localization and biological activity. Binds to ANGUSTIFOLIA (AN). As to expression, expressed during embryogenesis and in roots.

It localises to the cell membrane. In terms of biological role, part of a three-gene cluster containing FLC, UFC and DFC, which is coordinately regulated in response to vernalization. Also regulated by FLX. SOSEKI proteins (SOK1-5) locally interpret global polarity cues and can influence cell division orientation to coordinate cell polarization relative to body axes, probably by guiding ANGUSTIFOLIA (AN) polarized localization. The polypeptide is Protein SOSEKI 2 (Arabidopsis thaliana (Mouse-ear cress)).